A 197-amino-acid polypeptide reads, in one-letter code: Glycerol-3-phosphate acyltransferase (197 aa).

Transmembrane regions (helical) follow at residues 7-27 (PSIAALIGYAFGSIPFGLLLT), 56-76 (LAALTLVLDLVKGFVPVWIAW), 82-102 (DIGWAALGAVVGHCFPIWLGF), 116-136 (FGLGWGIGLAYAFVWLVMLAI), and 157-177 (YFGRPTFVPPLVIIAVIIIWL).

The protein belongs to the PlsY family. Probably interacts with PlsX.

It is found in the cell inner membrane. The catalysed reaction is an acyl phosphate + sn-glycerol 3-phosphate = a 1-acyl-sn-glycero-3-phosphate + phosphate. It participates in lipid metabolism; phospholipid metabolism. Its function is as follows. Catalyzes the transfer of an acyl group from acyl-phosphate (acyl-PO(4)) to glycerol-3-phosphate (G3P) to form lysophosphatidic acid (LPA). This enzyme utilizes acyl-phosphate as fatty acyl donor, but not acyl-CoA or acyl-ACP. This is Glycerol-3-phosphate acyltransferase from Erythrobacter litoralis (strain HTCC2594).